A 597-amino-acid polypeptide reads, in one-letter code: Elongation factor 4 (597 aa).

The tr-type G domain occupies Asp2–Lys184. GTP is bound by residues Asp14–Thr19 and Asn131–Asp134.

This sequence belongs to the TRAFAC class translation factor GTPase superfamily. Classic translation factor GTPase family. LepA subfamily.

The protein resides in the cell inner membrane. It catalyses the reaction GTP + H2O = GDP + phosphate + H(+). Functionally, required for accurate and efficient protein synthesis under certain stress conditions. May act as a fidelity factor of the translation reaction, by catalyzing a one-codon backward translocation of tRNAs on improperly translocated ribosomes. Back-translocation proceeds from a post-translocation (POST) complex to a pre-translocation (PRE) complex, thus giving elongation factor G a second chance to translocate the tRNAs correctly. Binds to ribosomes in a GTP-dependent manner. This chain is Elongation factor 4, found in Burkholderia ambifaria (strain MC40-6).